Consider the following 287-residue polypeptide: Cell division protein ZipA (287 aa).

M1 is a topological domain (periplasmic). A helical membrane pass occupies residues 2-22 (EIGLREWLIVIGIIVIAGILF). Residues 23–287 (DGWRRMRGSK…ERRALTQRRG (265 aa)) lie on the Cytoplasmic side of the membrane. The disordered stretch occupies residues 48–140 (DEEETTSAEV…PTQRITEDKD (93 aa)). Composition is skewed to basic and acidic residues over residues 64–77 (LDTH…EHDL), 85–104 (REGK…KDEP), and 121–140 (GRDD…EDKD).

The protein belongs to the ZipA family. As to quaternary structure, interacts with FtsZ via their C-terminal domains.

The protein resides in the cell inner membrane. Essential cell division protein that stabilizes the FtsZ protofilaments by cross-linking them and that serves as a cytoplasmic membrane anchor for the Z ring. Also required for the recruitment to the septal ring of downstream cell division proteins. This chain is Cell division protein ZipA, found in Pseudomonas syringae pv. syringae (strain B728a).